The following is a 375-amino-acid chain: Enoyl-[acyl-carrier-protein] reductase, mitochondrial (375 aa).

A mitochondrion-targeting transit peptide spans 1–37 (MAALMESVVGRALKFSSTANFRSIRRGETPTLCIKSF). Y96 (proton donor) is an active-site residue. NADP(+) is bound by residues N169, 195–198 (TSIV), 218–220 (RDR), 287–290 (YGGM), 312–314 (FWL), and K370.

It belongs to the zinc-containing alcohol dehydrogenase family. Quinone oxidoreductase subfamily. Homodimer.

It localises to the mitochondrion. The enzyme catalyses a 2,3-saturated acyl-[ACP] + NADP(+) = a (2E)-enoyl-[ACP] + NADPH + H(+). In terms of biological role, catalyzes the NADPH-dependent reduction of trans-2-enoyl thioesters in mitochondrial fatty acid synthesis (fatty acid synthesis type II). Fatty acid chain elongation in mitochondria uses acyl carrier protein (ACP) as an acyl group carrier, but the enzyme accepts both ACP and CoA thioesters as substrates in vitro. This is Enoyl-[acyl-carrier-protein] reductase, mitochondrial from Arabidopsis thaliana (Mouse-ear cress).